A 670-amino-acid chain; its full sequence is MTFSVQHAEIHFNQNHIPVSDQFDDVYFSNENGLAETDYVFLQGNQLWERWITHKDANFVIAETGFGTGLNFFAVTKLFREFRQQHENHPLKRLNFISFEKYPLKITALLQAHLACPQFEDLSAHLQRYWPSLILGCHRIHFGETTLDLWFGDVSENLPQLGDYMNERINAWFLDGFAPSKNPEMWNDDLYNLMFRFTKPNGTFATFTAASAVRKGLESAGFNVTKRKGFGKKRECLSGLKIQSKSTALSTPWYLAQPAKMEKQDVAIIGGGIASLCAAISLIKRGAKVTIYCEDDALALNASGNKQGAFYPQLSDDNALTVDFYLHAFSYGRQLLDWAIEQNIVFEHEFCGVALCAYNEKSAVKLTKISQLGLPNEIFQMLSAEQLSEKVGLPLNCEGGWIEQGAWLAPRQFVQNAFSFLEKQGVVIKTAQKITALSQLEKGWELKNMQGQKYCHEVVILANGHKITDFVQTEKLPLYPIRGQVSQIPTSENLLKLKSVLCYDGYLTPANQLKTSHCIGASMFRDNVDRDFSEQEQQENQQKLQQNIAQPWTQDVDTSDNLARVGIRCSVRDLAPMVGNVPHFEQQQADYYNLFNLRRRKQPIQSAANFQNLFLIAALGSRGLTSAPLLGETLASIIYGEPLPISEGILHNLSANRAWVKKWLKGSKVE.

The tRNA (mnm(5)s(2)U34)-methyltransferase stretch occupies residues 1–242 (MTFSVQHAEI…KRECLSGLKI (242 aa)). The FAD-dependent cmnm(5)s(2)U34 oxidoreductase stretch occupies residues 269–670 (IGGGIASLCA…KKWLKGSKVE (402 aa)).

It in the N-terminal section; belongs to the methyltransferase superfamily. tRNA (mnm(5)s(2)U34)-methyltransferase family. In the C-terminal section; belongs to the DAO family. FAD serves as cofactor.

Its subcellular location is the cytoplasm. The catalysed reaction is 5-aminomethyl-2-thiouridine(34) in tRNA + S-adenosyl-L-methionine = 5-methylaminomethyl-2-thiouridine(34) in tRNA + S-adenosyl-L-homocysteine + H(+). Functionally, catalyzes the last two steps in the biosynthesis of 5-methylaminomethyl-2-thiouridine (mnm(5)s(2)U) at the wobble position (U34) in tRNA. Catalyzes the FAD-dependent demodification of cmnm(5)s(2)U34 to nm(5)s(2)U34, followed by the transfer of a methyl group from S-adenosyl-L-methionine to nm(5)s(2)U34, to form mnm(5)s(2)U34. In Haemophilus influenzae (strain ATCC 51907 / DSM 11121 / KW20 / Rd), this protein is tRNA 5-methylaminomethyl-2-thiouridine biosynthesis bifunctional protein MnmC.